Here is a 251-residue protein sequence, read N- to C-terminus: UDP-N-acetylglucosamine--dolichyl-phosphate N-acetylglucosaminyltransferase (251 aa).

A helical transmembrane segment spans residues 150–167 (VGNLGLSFITFLLGGYYV).

It belongs to the glycosyltransferase 2 family.

It is found in the cell membrane. The catalysed reaction is a di-trans,poly-cis-dolichyl phosphate + UDP-N-acetyl-alpha-D-glucosamine = an N-acetyl-alpha-D-glucosaminyl-phospho-di-trans,poly-cis-dolichol + UDP. It participates in cell surface structure biogenesis; S-layer biogenesis. The protein operates within protein modification; protein glycosylation. Functionally, involved in the assembly of an N-linked disaccharide that decorates the S-layer glycoprotein and flagellins. AglK initiates N-linked glycosylation through the formation of alpha-linked dolichyl monophosphate N-acetylglucosamine. It catalyzes the transfer of GlcNAc from the donor substrate UDP-GlcNAc to dolichyl phosphate C55 (Dol-P) to yield Dol-P-GlcNAc. AglK reaction proceeds with retention of stereochemistry. The reaction is specific for UDP-GlcNAc. AglK shows a stronger preference for short dolichol (C55-60 Dol-P) substrates compared with the longer (C85-105 Dol-P). This Methanococcus voltae protein is UDP-N-acetylglucosamine--dolichyl-phosphate N-acetylglucosaminyltransferase.